We begin with the raw amino-acid sequence, 687 residues long: Ferric transport system permease protein FbpB (687 aa).

The next 19 helical transmembrane spans lie at 10-30 (LFES…ALPS), 50-70 (GWSS…FWLL), 85-105 (LGLI…YKVS), 106-126 (MGYS…FAFA), 141-161 (LLSI…AIFI), 192-212 (LFLS…FALY), 226-246 (IFSI…VTLM), 271-291 (GFNG…FMIL), 318-338 (YNII…IVFI), 347-367 (PLVL…YIAG), 378-398 (LGSM…MWIG), 425-445 (IIVM…SIFY), 450-472 (VNWG…QGLS), 484-504 (IYAG…AYIV), 517-537 (FLTM…YILA), 538-558 (FNDA…SMVM), 594-614 (IWFI…VTSF), 620-640 (TVSA…AYIL), and 649-669 (GVAI…ILFF). The region spanning 188–393 (ISNSLFLSGF…IFSLLIFIVQ (206 aa)) is the ABC transmembrane type-1 1 domain. The ABC transmembrane type-1 2 domain occupies 479–669 (LINTMIYAGI…VVMMAIILFF (191 aa)).

Belongs to the binding-protein-dependent transport system permease family. FbpB subfamily. The complex is composed of two ATP-binding proteins (FbpC), two transmembrane proteins (FbpB) and a solute-binding protein (FbpA).

It localises to the cell inner membrane. Functionally, part of the ABC transporter complex FbpABC (TC 3.A.1.10.1) involved in Fe(3+) ions import. Probably responsible for the translocation of the substrate across the membrane. This chain is Ferric transport system permease protein FbpB (fbpB), found in Actinobacillus pleuropneumoniae (Haemophilus pleuropneumoniae).